The chain runs to 209 residues: Segregation and condensation protein B (209 aa).

This sequence belongs to the ScpB family. Homodimer. Homodimerization may be required to stabilize the binding of ScpA to the Smc head domains. Component of a cohesin-like complex composed of ScpA, ScpB and the Smc homodimer, in which ScpA and ScpB bind to the head domain of Smc. The presence of the three proteins is required for the association of the complex with DNA.

The protein localises to the cytoplasm. In terms of biological role, participates in chromosomal partition during cell division. May act via the formation of a condensin-like complex containing Smc and ScpA that pull DNA away from mid-cell into both cell halves. In Geobacillus thermodenitrificans (strain NG80-2), this protein is Segregation and condensation protein B.